A 287-amino-acid polypeptide reads, in one-letter code: Protein UL24 homolog (287 aa).

Disordered stretches follow at residues 1–33 and 254–287; these read MARR…FSRR and RVGK…DSNL. Basic residues predominate over residues 16–33; the sequence is HRSRTRSKTAHHRKFSRR.

Belongs to the herpesviridae UL24 family.

It localises to the virion. The protein localises to the host cytoplasm. Its subcellular location is the host nucleus. The protein resides in the host nucleolus. It is found in the host Golgi apparatus. In terms of biological role, may participate in nuclear egress of viral particles. Plays a role in the dispersal of several host nucleolar proteins including NCL/nucleolin and NPM1. Since deletion of host NCL/nucleolin negatively impact on nuclear egress, UL24 supposedly acts on this process through its effect on host nucleoli. In Infectious laryngotracheitis virus (strain Thorne V882) (ILTV), this protein is Protein UL24 homolog.